Consider the following 593-residue polypeptide: Pentatricopeptide repeat-containing protein At5g24830 (593 aa).

PPR repeat units follow at residues 120 to 154 (CLSI…GVIP), 155 to 189 (GLIT…GPSP), 190 to 224 (NCVS…GIRP), 225 to 256 (NRVT…ILDS), 264 to 298 (DIVI…NVPA), 299 to 333 (DSVV…GVNP), 334 to 368 (DVFT…GVAP), 369 to 403 (DQIS…SLLP), 404 to 438 (EVLL…GVKP), 439 to 473 (NVYT…KIHP), 474 to 508 (DTTT…GCQP), and 509 to 543 (DIIT…GITI).

It belongs to the PPR family. P subfamily.

The chain is Pentatricopeptide repeat-containing protein At5g24830 from Arabidopsis thaliana (Mouse-ear cress).